Here is a 2180-residue protein sequence, read N- to C-terminus: MMTSPSDYQSNSSLATTYSNAPKLSKALSNKYDYLYEVDILKENQKISDTYLPLLNPYSAFAKRSVTPWSQIRSLVQSKPRHVKEYVAASKLDQHPVFATGEEQFVTLHIPEEFASHWKSHQFTHIHFGAVKIALTYHGRKGQPVVARLALLDTRYLEYQHANLGTAEITLNAGTVFITLFPNFTMSLSDANLSTALKIQVQIQGAPLTKDSIQATLHYQIAWRVQNHAMDLTLPGGEEALFLKIDAGNGATQCTQVPRQLSKEDLIKILPDSWVTNYEKLKEPEEPLRSTEVSMSKRHDKSVAISFDHSHYKKLRNTHHFMGMISDDVIVLDDPETFSKTLPSLMQTHDWIHHFQLDGRAVSWYKDPFDGHCPWDIDCQCYSCLYSEDEEDFEDGFPTKYKGIPRPGSIAERKMQEEANLKKLYEDKDPFVGSLSRPGKYEYLVRYDAPSWAKDPHLTVEPTGWDSDEPILPNQPFITRNTLPKIYMFNPLNYENNFPPLSSFSKDGADHTPKIPKRNVVLPSGAKDPTGDLEATVNWQTENALAQNRMLTTIDRTLKETVTKVDRVSDQSSKNQGLIRVLEQQLQDLNKRICPPGTSLFHFFDQQKSEMASLKEQIRLLKEQPQKNETDTPSYQSSYQPFHNFSSPYMPSNPPNSPFTNFANTPQPQPSLFSQYPIQPKSPNTFDLAKLVWEKKDAIAEEKRAKKKLQKDEVKQKTSLPPESKRPDPQSSSHLGDQFMISDPTLPKVYELNEPSVPSEDTSSQSYISTEESVEDTDSFSVVSEESTQLSQLSSSSNDSPENNENTLPQTFMVRPTEPEISEVEDEVDGMTEEPIPERRPEITPPKMVGTGFHTFSLDDISITKWPERIQDFHTWMLTKQLVEREPFLILSEFTARLSGTLREWWNSVGPDDKNRFLTSQDFTWNIRILYSYFCGDQSQNKEELRRQIFEMKCLSYDRKKIDRHFQRMIKLFYHIGGDISLKQAFISSLPPILSERISALIKERGTSGTQMHVGDIRQTGFYVLDDLCSKRKFFNQMKKMSRDLEKACTKSDLIIKGDKGCSGYCNPSRRRKYKRFKLPSFKERDGRQYRKRRRFFRKSKTSKAMRQKPRSCFTCGKIGHFSRNCPQNKKSIKLISEIQKYTGIDIEDDLESVFSIEDEPSEDTLFSLEFYEEYAGEQYQITSYEAPKTENPPLPKIHTIVEIPQTEVKVYTSKWDKPISVIAFYDTGAAYSIMDPAILPSEYWIPHFRHFGTADDGILTTTVKTKHPITIEFFPGFKYTTKLLGSDIPGKDLLIGFDIYRQLNNKLRIGADGIRWKNQFKRYTEIPRLFQLTTSNELQQLEDVIKNQLCAESHVDFLSKCSHPLWLNQDFFIQLPFKRNENINPTKASHSGMNPEHLQLALKECDELQQFDLIEPSDSQWACEAFYVNKRSEQVRGKLRLVINYQPLNHFLQDDKFPIPNKLTLFSHLSKAKLFSKFDLKSGFWQLGIHPNERPKTGFCIPDRHFQWKVMPFGLKTAPSLFQKAMIKIFQPILFSALVYIDDILLFSETLEDHIKLLNQFISLVKKFGVMLSAKKMILAQNKIQFLGMDFADGTFSPAGHISLELQKFPDTNLSVKQIQQFLGIVNYIRDFIPEVTEHISPLSDMLKKKPPAWGKCQDNAVKQLKQLAQQVKSLHIPSEGKKILQTDASDQYWSAVLLEEHNGKRKICGFASGKFKVSEQHYHSTFKEILAVKNGIKKFNFFLIHTNFLVEMDMRAFPKMIRLNPKIVPNSQLLRWAQWFSPYQFEVKHLKGKDNILADFLSRPHEFSQRLKNSPKVLMFQRRTRSNSTKSKADSSQSTGSSYKLSHNLPENPPEAFDLDYPWDTSVFLERRTFYELQVFKKYGGSILRPFGVDPEYPFAHIFIPNPTDFSEDLLWMFWYLLNHFHILMEFRCSKFSKFDQVNPWMMKFLLWFNNHNYWASLFKCMKGIKKYVVIWFYRPVNYYQGKLCALPHSSIVKWNHVSVLNDEDEYSELQRFIFQENKCIPKEIWPGSLGSWNYGNSDHPHGQWIRDALREYREMNDYFQDAQDPYPAYSKVDLTQEELNTLRITRSYGSSSEDADMVKRSIYTVQSNIVKNSPRKRKGKAKSKSSTRNEKRRAKNKCKYRSLHGEDWWIELGYSTKPSTPSWTQDSSSEPCI.

Disordered regions lie at residues 507–529 (DGAD…AKDP), 624–679 (QPQK…YPIQ), 703–809 (KRAK…NTLP), and 822–848 (SEVE…PPKM). A coiled-coil region spans residues 573-624 (SKNQGLIRVLEQQLQDLNKRICPPGTSLFHFFDQQKSEMASLKEQIRLLKEQ). 2 stretches are compositionally biased toward polar residues: residues 631-643 (DTPS…QPFH) and 670-679 (PSLFSQYPIQ). Residues 703–716 (KRAKKKLQKDEVKQ) are compositionally biased toward basic and acidic residues. Over residues 759–771 (SEDTSSQSYISTE) the composition is skewed to polar residues. Residues 784–807 (SEESTQLSQLSSSSNDSPENNENT) show a composition bias toward low complexity. Positions 822-832 (SEVEDEVDGMT) are enriched in acidic residues. The CCHC-type zinc-finger motif lies at 1113–1126 (CFTCGKIGHFSRNC). Asp1227 (for protease activity; shared with dimeric partner) is an active-site residue. The Mg(2+) site is built by Asp1480, Asp1543, and Asp1544. Disordered stretches follow at residues 1824–1848 (RRTR…YKLS), 2115–2145 (NIVK…KNKC), and 2161–2180 (YSTK…EPCI). A compositionally biased stretch (polar residues) spans 1828-1847 (SNSTKSKADSSQSTGSSYKL). The span at 2120–2145 (SPRKRKGKAKSKSSTRNEKRRAKNKC) shows a compositional bias: basic residues. Residues 2163 to 2180 (TKPSTPSWTQDSSSEPCI) are compositionally biased toward polar residues.

This sequence belongs to the Petuviruses genome polyprotein family.

The enzyme catalyses DNA(n) + a 2'-deoxyribonucleoside 5'-triphosphate = DNA(n+1) + diphosphate. Encodes presumably for at least four polypeptides: Movement protein (MP), capsid protein (CP), Protease (PR), and reverse transcriptase (RT). The polypeptide is Genome polyprotein (Petunia (PVCV)).